Reading from the N-terminus, the 432-residue chain is Glutamate-1-semialdehyde 2,1-aminomutase 1 (432 aa).

An N6-(pyridoxal phosphate)lysine modification is found at K268.

This sequence belongs to the class-III pyridoxal-phosphate-dependent aminotransferase family. HemL subfamily. In terms of assembly, homodimer. It depends on pyridoxal 5'-phosphate as a cofactor.

Its subcellular location is the cytoplasm. The enzyme catalyses (S)-4-amino-5-oxopentanoate = 5-aminolevulinate. Its pathway is porphyrin-containing compound metabolism; protoporphyrin-IX biosynthesis; 5-aminolevulinate from L-glutamyl-tRNA(Glu): step 2/2. The chain is Glutamate-1-semialdehyde 2,1-aminomutase 1 from Bacillus licheniformis (strain ATCC 14580 / DSM 13 / JCM 2505 / CCUG 7422 / NBRC 12200 / NCIMB 9375 / NCTC 10341 / NRRL NRS-1264 / Gibson 46).